The primary structure comprises 326 residues: Metal-binding protein YtgA (326 aa).

The N-terminal stretch at 1–21 (MSFFHTRKYKLILRGLLCLAG) is a signal peptide. 4 residues coordinate Fe(2+): histidine 75, histidine 141, histidine 207, and aspartate 299.

Belongs to the bacterial solute-binding protein 9 family. Monomer.

The protein resides in the periplasm. In terms of biological role, part of the ATP-binding cassette (ABC) transport system YtgABCD involved in metal import. Binds Fe(2+), Mn(2+) and Ni(2+), with a preference for Fe(2+) and delivers them to the membrane permease for translocation into the cytoplasm. This Chlamydia trachomatis serovar D (strain ATCC VR-885 / DSM 19411 / UW-3/Cx) protein is Metal-binding protein YtgA.